The following is a 465-amino-acid chain: 5'-adenylylsulfate reductase 1, chloroplastic (465 aa).

Residues 1-53 (MAMSVNVSSSSSSGIINSRFGVSLEPKVSQIGSLRLLDRVHVAPVSLNLSGKR) constitute a chloroplast transit peptide. The segment at 73–327 (LAATMVAEIA…KAKECGLHKG (255 aa)) is reductase domain. The Thioredoxin domain maps to 344–465 (SAVADIFKSE…SLTSFLNLVR (122 aa)). Catalysis depends on nucleophile residues C385 and C388. A disulfide bridge connects residues C385 and C388.

It belongs to the APS reductase family. The cofactor is [4Fe-4S] cluster. As to expression, leaves, roots and stem.

It localises to the plastid. Its subcellular location is the chloroplast. It carries out the reaction glutathione disulfide + sulfite + AMP + 2 H(+) = adenosine 5'-phosphosulfate + 2 glutathione. Stimulated by sodium sulfate &gt; ammonium sulfate and is sensitive to inactivation by 5'AMP. Reduces sulfate for Cys biosynthesis. Substrate preference is adenosine-5'-phosphosulfate (APS) &gt;&gt; 3'-phosphoadenosine-5'-phosphosulfate (PAPS). Uses glutathione or DTT as source of protons. The protein is 5'-adenylylsulfate reductase 1, chloroplastic (APR1) of Arabidopsis thaliana (Mouse-ear cress).